The sequence spans 455 residues: RQC trigger complex subunit RQT4 homolog (455 aa).

2 disordered regions span residues serine 64–serine 98 and proline 118–threonine 148. Composition is skewed to polar residues over residues threonine 65–serine 98 and alanine 119–serine 130. Serine 70 carries the phosphoserine modification. Position 380 is a phosphoserine (serine 380).

In terms of assembly, component of the RQT (ribosome quality control trigger) complex.

It localises to the cytoplasm. The protein localises to the cytosol. In terms of biological role, probably functions as part of the RQC trigger (RQT) complex that activates the ribosome quality control (RQC) pathway, a pathway that degrades nascent peptide chains during problematic translation. This is RQC trigger complex subunit RQT4 homolog from Schizosaccharomyces pombe (strain 972 / ATCC 24843) (Fission yeast).